The sequence spans 602 residues: Elongation factor 4 (602 aa).

In terms of domain architecture, tr-type G spans 8 to 189 (KNIRNFSIIA…KIITTIPAPS (182 aa)). GTP-binding positions include 20–25 (DHGKST) and 136–139 (NKID).

Belongs to the TRAFAC class translation factor GTPase superfamily. Classic translation factor GTPase family. LepA subfamily.

It is found in the cell inner membrane. The catalysed reaction is GTP + H2O = GDP + phosphate + H(+). In terms of biological role, required for accurate and efficient protein synthesis under certain stress conditions. May act as a fidelity factor of the translation reaction, by catalyzing a one-codon backward translocation of tRNAs on improperly translocated ribosomes. Back-translocation proceeds from a post-translocation (POST) complex to a pre-translocation (PRE) complex, thus giving elongation factor G a second chance to translocate the tRNAs correctly. Binds to ribosomes in a GTP-dependent manner. This Helicobacter pylori (strain HPAG1) protein is Elongation factor 4.